The chain runs to 169 residues: Vimentin-type intermediate filament-associated coiled-coil protein (169 aa).

A coiled-coil region spans residues 7-89 (LQIREANAHL…VHSLQATVHQ (83 aa)). Positions 126 to 135 (RLGPLPASDP) are enriched in low complexity. Residues 126–169 (RLGPLPASDPGHPPPGGPGPPLDNSTGEEADRDHLQPAVFGTTV) form a disordered region. A compositionally biased stretch (pro residues) spans 136 to 146 (GHPPPGGPGPP).

It is found in the cytoplasm. The protein is Vimentin-type intermediate filament-associated coiled-coil protein (VMAC) of Homo sapiens (Human).